We begin with the raw amino-acid sequence, 246 residues long: Uridylate kinase (246 aa).

Position 11-14 (11-14 (KISG)) interacts with ATP. Glycine 53 serves as a coordination point for UMP. ATP-binding residues include glycine 54 and arginine 58. UMP contacts are provided by residues aspartate 74 and 135-142 (TGSPYLTT). Threonine 162, tyrosine 169, and aspartate 172 together coordinate ATP.

This sequence belongs to the UMP kinase family. Homohexamer.

The protein localises to the cytoplasm. The enzyme catalyses UMP + ATP = UDP + ADP. Its pathway is pyrimidine metabolism; CTP biosynthesis via de novo pathway; UDP from UMP (UMPK route): step 1/1. With respect to regulation, inhibited by UTP. Its function is as follows. Catalyzes the reversible phosphorylation of UMP to UDP. The sequence is that of Uridylate kinase from Chlamydia abortus (strain DSM 27085 / S26/3) (Chlamydophila abortus).